The following is a 734-amino-acid chain: Mechanosensitive ion channel protein 10 (734 aa).

Disordered stretches follow at residues 1–75 and 115–136; these read MAEQ…LTQR and SFSRASPNNKSNRSVGSPAPVT. The span at 24–39 shows a compositional bias: basic and acidic residues; the sequence is EASRRSKEMASPESEK. A Phosphoserine modification is found at serine 34. Composition is skewed to polar residues over residues 65-75 and 117-129; these read PNQNNVGLTQR and SRASPNNKSNRSV. Serine 128 and serine 131 each carry phosphoserine. Transmembrane regions (helical) follow at residues 164–184, 196–216, 249–269, 288–308, 516–536, and 551–571; these read ISTLALIESAFFVVILSALVA, FWGLEVWKWCVLVMVIFSGML, SVQVFIWLCLILVAWILLFNH, LISILTGAFFWLVKTLLLKIL, LVTAILMVVTVVIWLLLLEVA, and LAFIIGSTCKNLFESIVFVFV.

Belongs to the MscS (TC 1.A.23) family. As to expression, detected in the root tip and throughout the vasculature of the root and leaf.

It is found in the cell membrane. In terms of biological role, mechanosensitive channel that opens in response to stretch forces in the membrane lipid bilayer. In Arabidopsis thaliana (Mouse-ear cress), this protein is Mechanosensitive ion channel protein 10 (MSL10).